A 181-amino-acid polypeptide reads, in one-letter code: Large ribosomal subunit protein uL6 (181 aa).

The protein belongs to the universal ribosomal protein uL6 family. In terms of assembly, part of the 50S ribosomal subunit.

In terms of biological role, this protein binds to the 23S rRNA, and is important in its secondary structure. It is located near the subunit interface in the base of the L7/L12 stalk, and near the tRNA binding site of the peptidyltransferase center. In Flavobacterium psychrophilum (strain ATCC 49511 / DSM 21280 / CIP 103535 / JIP02/86), this protein is Large ribosomal subunit protein uL6.